Here is a 381-residue protein sequence, read N- to C-terminus: KRR1 small subunit processome component homolog (381 aa).

Positions 1 to 51 (MASPSLERPEKGAGKSEFRNQKPKPENQDESELLTVPDGWKEPAFSKEDNP) are disordered. Position 2 is an N-acetylalanine (Ala-2). Phosphoserine occurs at positions 3 and 5. Composition is skewed to basic and acidic residues over residues 7 to 27 (ERPE…KPEN) and 39 to 51 (GWKE…EDNP). Residue Lys-24 forms a Glycyl lysine isopeptide (Lys-Gly) (interchain with G-Cter in SUMO2) linkage. The 53-residue stretch at 154–206 (KERFVKRRQRLIGPKGSTLKALELLTNCYIMVQGNTVSAIGPFSGLKEVRKVV) folds into the KH domain. Residues 250 to 262 (NVNKRKEPKKKTV) are compositionally biased toward basic residues. Disordered stretches follow at residues 250-278 (NVNK…ESQI) and 309-338 (AISK…ASTE). Residues Lys-340 and Lys-369 each participate in a glycyl lysine isopeptide (Lys-Gly) (interchain with G-Cter in SUMO2) cross-link.

This sequence belongs to the KRR1 family. In terms of assembly, part of the small subunit (SSU) processome, composed of more than 70 proteins and the RNA chaperone small nucleolar RNA (snoRNA) U3. (Microbial infection) Directly interacts with HIV-1 protein VPR. Also identified in a complex with NR3C1 and HIV-1 protein VPR.

The protein resides in the nucleus. The protein localises to the nucleolus. It is found in the cytoplasm. Its function is as follows. Part of the small subunit (SSU) processome, first precursor of the small eukaryotic ribosomal subunit. During the assembly of the SSU processome in the nucleolus, many ribosome biogenesis factors, an RNA chaperone and ribosomal proteins associate with the nascent pre-rRNA and work in concert to generate RNA folding, modifications, rearrangements and cleavage as well as targeted degradation of pre-ribosomal RNA by the RNA exosome. This is KRR1 small subunit processome component homolog from Homo sapiens (Human).